A 254-amino-acid polypeptide reads, in one-letter code: Probable WRKY transcription factor 67 (254 aa).

The WRKY DNA-binding region spans 102-170; that stretch reads SRTMCPNDGF…YLGKHVCKAF (69 aa).

Belongs to the WRKY group III family.

The protein localises to the nucleus. Its function is as follows. Transcription factor. Interacts specifically with the W box (5'-(T)TGAC[CT]-3'), a frequently occurring elicitor-responsive cis-acting element. In Arabidopsis thaliana (Mouse-ear cress), this protein is Probable WRKY transcription factor 67 (WRKY67).